The primary structure comprises 116 residues: Large ribosomal subunit protein uL18 (116 aa).

Belongs to the universal ribosomal protein uL18 family. Part of the 50S ribosomal subunit; part of the 5S rRNA/L5/L18/L25 subcomplex. Contacts the 5S and 23S rRNAs.

Its function is as follows. This is one of the proteins that bind and probably mediate the attachment of the 5S RNA into the large ribosomal subunit, where it forms part of the central protuberance. The protein is Large ribosomal subunit protein uL18 of Acinetobacter baumannii (strain AB307-0294).